Here is a 549-residue protein sequence, read N- to C-terminus: Cation/acetate symporter ActP (549 aa).

The next 13 membrane-spanning stretches (helical) occupy residues 33 to 53, 77 to 97, 103 to 123, 148 to 168, 183 to 203, 206 to 226, 262 to 282, 303 to 323, 355 to 375, 404 to 424, 428 to 448, 464 to 484, and 493 to 513; these read WQAI…TYWA, LAIA…ALVF, GLIY…LIAE, ILSA…QMVG, IAVV…GMLA, WVQI…AFMV, ISAL…PHIL, GFMG…IMLV, LFLG…VAGL, VSKI…VLFE, IAFM…PIIL, GGWL…TIWV, and IFPY…GIWF.

This sequence belongs to the sodium:solute symporter (SSF) (TC 2.A.21) family.

The protein localises to the cell inner membrane. Its function is as follows. Transports acetate. In Salmonella gallinarum (strain 287/91 / NCTC 13346), this protein is Cation/acetate symporter ActP.